We begin with the raw amino-acid sequence, 271 residues long: Neurexophilin-1 (271 aa).

Residues 1-21 (MQAACWYVLFLLQPTVYLVTC) form the signal peptide. The segment at 22–97 (ANLTNGGKSE…WDWLRNSTDL (76 aa)) is II. Asparagine 23, asparagine 68, asparagine 93, asparagine 146, asparagine 156, and asparagine 162 each carry an N-linked (GlcNAc...) asparagine glycan. The segment at 98 to 176 (QEPRPRAKRR…LVPPTKIVEF (79 aa)) is III. The tract at residues 177-185 (DLAQQTVID) is IV (linker domain). The tract at residues 186-271 (AKDSKSFNCR…HSDTPYFPSG (86 aa)) is v (Cys-rich).

This sequence belongs to the neurexophilin family.

It is found in the secreted. Functionally, may be signaling molecules that resemble neuropeptides and that act by binding to alpha-neurexins and possibly other receptors. The protein is Neurexophilin-1 (NXPH1) of Homo sapiens (Human).